The following is a 63-amino-acid chain: Protease 2 small chain (63 aa).

The region spanning 11–63 (QWGLSGTYGIRANTAWDNGYQGQGKIIAVVDTGITDHPDLLANRTSPLGYDFI) is the Peptidase S8 domain.

It belongs to the peptidase S8 family. As to quaternary structure, heterodimer of a large and a small chain.

The protein localises to the secreted. The polypeptide is Protease 2 small chain (Achromobacter lyticus).